The following is a 406-amino-acid chain: E3 ubiquitin-protein ligase RING1 (406 aa).

Thr24 carries the phosphothreonine modification. Positions 30–234 (MDGTEIAVSP…GGAGSEDSGD (205 aa)) are necessary for transcriptional repression. Ser38 bears the Phosphoserine mark. The RING-type zinc finger occupies 48 to 88 (CPICLDMLKNTMTTKECLHRFCSDCIVTALRSGNKECPTCR). Phosphoserine occurs at positions 140, 187, and 190. Disordered stretches follow at residues 148–263 (QAMH…GEIE) and 309–354 (QQQE…PSLE). Over residues 175–187 (EPGEGEGDGEDVS) the composition is skewed to acidic residues. Positions 201-204 (KRPR) match the Nuclear localization signal motif. Residues 205–228 (GGGAGGSSVGTGGGGTGGVGGGAG) show a composition bias toward gly residues. 2 positions are modified to phosphothreonine: Thr215 and Thr220. Residues Ser229 and Ser232 each carry the phosphoserine modification. Residues 230-406 (EDSGDRGGTL…LCYAPTKDPK (177 aa)) are necessary for interaction with CBX2. Positions 235–244 (RGGTLGGGTL) are enriched in gly residues. The segment covering 246–258 (PPSPPGAPSPPEP) has biased composition (pro residues). Residues Ser248 and Ser254 each carry the phosphoserine modification. Residues 315 to 343 (EPGGPGGGASDTGGPDGCGGEGGGAGGGD) show a composition bias toward gly residues.

Component of chromatin-associated Polycomb (PcG) complexes. Interacts with BMI1. Part of the E2F6.com-1 complex in G0 phase composed of E2F6, MGA, MAX, TFDP1, CBX3, BAT8, EUHMTASE1, RING1, RNF2/RING2 MBLR, L3MBTL2 and YAF2. Interacts with CBX2 and PCGF6. Component of a PRC1-like complex. Component of repressive BCOR complex containing Polycomb group subcomplex at least composed of RYBP, PCGF1, BCOR and RNF2/RING2. Interacts with PCGF2, RNF2; CBX6, CBX7 and CBX8. Interacts with PHC2. Interacts with MN1. Interacts with USP26.

It is found in the nucleus. Its subcellular location is the nucleus speckle. The enzyme catalyses S-ubiquitinyl-[E2 ubiquitin-conjugating enzyme]-L-cysteine + [acceptor protein]-L-lysine = [E2 ubiquitin-conjugating enzyme]-L-cysteine + N(6)-ubiquitinyl-[acceptor protein]-L-lysine.. It participates in protein modification; protein ubiquitination. Its function is as follows. Constitutes one of the E3 ubiquitin-protein ligases that mediate monoubiquitination of 'Lys-119' of histone H2A, thereby playing a central role in histone code and gene regulation. H2A 'Lys-119' ubiquitination gives a specific tag for epigenetic transcriptional repression and participates in X chromosome inactivation of female mammals. Essential component of a Polycomb group (PcG) multiprotein PRC1-like complex, a complex class required to maintain the transcriptionally repressive state of many genes, including Hox genes, throughout development. PcG PRC1 complex acts via chromatin remodeling and modification of histones, rendering chromatin heritably changed in its expressibility. Compared to RNF2/RING2, it does not have the main E3 ubiquitin ligase activity on histone H2A, and it may rather act as a modulator of RNF2/RING2 activity. The sequence is that of E3 ubiquitin-protein ligase RING1 from Homo sapiens (Human).